The sequence spans 682 residues: Heat shock 70 kDa protein 10, mitochondrial (682 aa).

The N-terminal 50 residues, 1-50 (MATAALLRSIRRREVVSSPFSAYRCLSSSGKASLNSSYLGQNFRSFSRAF), are a transit peptide targeting the mitochondrion. The tract at residues 646–682 (KIGEHMSGGSGGGSAPGGGSEGGSDQAPEAEYEEVKK) is disordered. Gly residues predominate over residues 651 to 667 (MSGGSGGGSAPGGGSEG). Acidic residues predominate over residues 673-682 (PEAEYEEVKK).

The protein belongs to the heat shock protein 70 (TC 1.A.33) family. DnaK subfamily.

It is found in the mitochondrion. Its function is as follows. Chaperone involved in the maturation of iron-sulfur [Fe-S] cluster-containing proteins. Has a low intrinsic ATPase activity which is markedly stimulated by HSCB and ISU1. In cooperation with other chaperones, Hsp70s are key components that facilitate folding of de novo synthesized proteins, assist translocation of precursor proteins into organelles, and are responsible for degradation of damaged protein under stress conditions. The protein is Heat shock 70 kDa protein 10, mitochondrial of Arabidopsis thaliana (Mouse-ear cress).